Consider the following 425-residue polypeptide: Enolase (425 aa).

Residue Gln-163 coordinates (2R)-2-phosphoglycerate. Residue Glu-205 is the Proton donor of the active site. The Mg(2+) site is built by Asp-242, Glu-285, and Asp-312. Lys-337, Arg-366, Ser-367, and Lys-388 together coordinate (2R)-2-phosphoglycerate. The active-site Proton acceptor is the Lys-337.

It belongs to the enolase family. Mg(2+) is required as a cofactor.

The protein resides in the cytoplasm. Its subcellular location is the secreted. The protein localises to the cell surface. The catalysed reaction is (2R)-2-phosphoglycerate = phosphoenolpyruvate + H2O. It participates in carbohydrate degradation; glycolysis; pyruvate from D-glyceraldehyde 3-phosphate: step 4/5. Its function is as follows. Catalyzes the reversible conversion of 2-phosphoglycerate (2-PG) into phosphoenolpyruvate (PEP). It is essential for the degradation of carbohydrates via glycolysis. In Cereibacter sphaeroides (strain ATCC 17025 / ATH 2.4.3) (Rhodobacter sphaeroides), this protein is Enolase.